The primary structure comprises 222 residues: MEYNRQPCPIRIVEDCGCAFMMGTIGGSLFEFLKGFRNAPTGLQRRLYGGIDLVKMRTPSIAGSFAVWGATFSTVDCALVHYRQREDAWNSILSGAATGGILAARNGIRAMANSALVGCLVLAMIEGAGAAVATINAADKGAGIVIKPQRAQWEAILETIDPKRASSTQDFALAEFERVLDKCRASREPNLLQDIPVKSHERDSKQKPFYSLLDLVKLSQMF.

The next 3 membrane-spanning stretches (helical) occupy residues 16 to 36 (CGCA…LKGF), 60 to 80 (SIAG…CALV), and 115 to 135 (ALVG…VATI).

Belongs to the Tim17/Tim22/Tim23 family. Component of the TIM23 complex at least composed of Tim23, Tim17 (Tim17a1, Tim17a2 or Tim17b1) and a Tim50. The complex interacts with the Tim44 component of the PAM complex.

It is found in the mitochondrion inner membrane. In terms of biological role, essential component of the TIM23 complex, a complex that mediates the translocation of transit peptide-containing proteins across the mitochondrial inner membrane. This Drosophila melanogaster (Fruit fly) protein is Probable mitochondrial import inner membrane translocase subunit Tim17 3 (Tim17a1).